Consider the following 350-residue polypeptide: N-acetyl-gamma-glutamyl-phosphate reductase (350 aa).

The active site involves C153.

It belongs to the NAGSA dehydrogenase family. Type 1 subfamily.

It localises to the cytoplasm. The catalysed reaction is N-acetyl-L-glutamate 5-semialdehyde + phosphate + NADP(+) = N-acetyl-L-glutamyl 5-phosphate + NADPH + H(+). It functions in the pathway amino-acid biosynthesis; L-arginine biosynthesis; N(2)-acetyl-L-ornithine from L-glutamate: step 3/4. Functionally, catalyzes the NADPH-dependent reduction of N-acetyl-5-glutamyl phosphate to yield N-acetyl-L-glutamate 5-semialdehyde. The chain is N-acetyl-gamma-glutamyl-phosphate reductase from Gloeobacter violaceus (strain ATCC 29082 / PCC 7421).